A 375-amino-acid chain; its full sequence is Probable dipeptidase PepE (375 aa).

A run of 2 helical transmembrane segments spans residues 15 to 35 (LALA…ITPG) and 55 to 75 (LVLP…LAAL). Residues Asp-230, Asp-242, His-306, Glu-335, and Glu-349 each coordinate Mn(2+).

It belongs to the peptidase M24B family. Mn(2+) is required as a cofactor.

It localises to the cell membrane. In Mycobacterium bovis (strain ATCC BAA-935 / AF2122/97), this protein is Probable dipeptidase PepE (pepE).